The primary structure comprises 334 residues: Desumoylating isopeptidase 1 homolog (334 aa).

One can recognise a PPPDE domain in the interval 30–174 (TVVRLNVYDM…FLEKCIPQEW (145 aa)). Residues His55 and Cys133 contribute to the active site. Residues 310-325 (SNIGKTNSTPGTTSNG) are compositionally biased toward polar residues. Residues 310–334 (SNIGKTNSTPGTTSNGLAKPTCSEC) form a disordered region.

It belongs to the DeSI family. In terms of tissue distribution, expressed in the pharynx, hypodermis, intestine, head neuron and tail neuron.

It localises to the cytoplasm. The protein localises to the nucleus. Functionally, protease which deconjugates SUMO from some substrate proteins. Has isopeptidase but not SUMO-processing activity. Collaborates with ubql-1 in the export of ubiquitinated proteins from the nucleus to the cytoplasm. This Caenorhabditis elegans protein is Desumoylating isopeptidase 1 homolog.